We begin with the raw amino-acid sequence, 383 residues long: Succinyl-diaminopimelate desuccinylase (383 aa).

His73 lines the Zn(2+) pocket. Asp75 is a catalytic residue. Asp107 provides a ligand contact to Zn(2+). The active-site Proton acceptor is Glu141. Residues Glu142, Glu170, and His356 each coordinate Zn(2+).

It belongs to the peptidase M20A family. DapE subfamily. As to quaternary structure, homodimer. It depends on Zn(2+) as a cofactor. Co(2+) is required as a cofactor.

It catalyses the reaction N-succinyl-(2S,6S)-2,6-diaminopimelate + H2O = (2S,6S)-2,6-diaminopimelate + succinate. Its pathway is amino-acid biosynthesis; L-lysine biosynthesis via DAP pathway; LL-2,6-diaminopimelate from (S)-tetrahydrodipicolinate (succinylase route): step 3/3. Its function is as follows. Catalyzes the hydrolysis of N-succinyl-L,L-diaminopimelic acid (SDAP), forming succinate and LL-2,6-diaminopimelate (DAP), an intermediate involved in the bacterial biosynthesis of lysine and meso-diaminopimelic acid, an essential component of bacterial cell walls. The sequence is that of Succinyl-diaminopimelate desuccinylase from Pseudomonas putida (strain ATCC 700007 / DSM 6899 / JCM 31910 / BCRC 17059 / LMG 24140 / F1).